Here is a 250-residue protein sequence, read N- to C-terminus: Cruxrhodopsin-1 (250 aa).

The Extracellular portion of the chain corresponds to 1 to 9 (MPEPGSEAI). A helical membrane pass occupies residues 10–27 (WLWLGTAGMFLGMLYFIA). Residues 28–41 (RGWGETDSRRQKFY) lie on the Cytoplasmic side of the membrane. A helical membrane pass occupies residues 42 to 60 (IATILITAIAFVNYLAMAL). Over 61-77 (GFGLTIVEFAGEEHPIY) the chain is Extracellular. Residues 78–94 (WARYSDWLFTTPLLLYD) traverse the membrane as a helical segment. The Cytoplasmic portion of the chain corresponds to 95–105 (LGLLAGADRNT). Residues 106 to 125 (ITSLVSLDVLMIGTGLVATL) traverse the membrane as a helical segment. Topologically, residues 126–138 (SPGSGVLSAGAER) are extracellular. The helical transmembrane segment at 139–158 (LVWWGISTAFLLVLLYFLFS) threads the bilayer. At 159-176 (SLSGRVADLPSDTRSTFK) the chain is on the cytoplasmic side. The chain crosses the membrane as a helical span at residues 177-195 (TLRNLVTVVWLVYPVWWLI). Over 196–207 (GTEGIGLVGIGI) the chain is Extracellular. Residues 208–227 (ETAGFMVIDLTAKVGFGIIL) form a helical membrane-spanning segment. Lys220 bears the N6-(retinylidene)lysine mark. At 228 to 250 (LRSHGVLDGAAETTGTGATPADD) the chain is on the cytoplasmic side.

It belongs to the archaeal/bacterial/fungal opsin family. As to quaternary structure, homotrimer.

The protein resides in the cell membrane. Functionally, light-driven proton pump. This Haloarcula argentinensis protein is Cruxrhodopsin-1 (cop1).